Reading from the N-terminus, the 597-residue chain is Elongation factor 4 (597 aa).

Positions 2-184 constitute a tr-type G domain; sequence KHIRNFSIIA…NIVSAIPAPE (183 aa). GTP-binding positions include 14-19 and 131-134; these read DHGKST and NKID.

Belongs to the TRAFAC class translation factor GTPase superfamily. Classic translation factor GTPase family. LepA subfamily.

Its subcellular location is the cell inner membrane. It carries out the reaction GTP + H2O = GDP + phosphate + H(+). Its function is as follows. Required for accurate and efficient protein synthesis under certain stress conditions. May act as a fidelity factor of the translation reaction, by catalyzing a one-codon backward translocation of tRNAs on improperly translocated ribosomes. Back-translocation proceeds from a post-translocation (POST) complex to a pre-translocation (PRE) complex, thus giving elongation factor G a second chance to translocate the tRNAs correctly. Binds to ribosomes in a GTP-dependent manner. This chain is Elongation factor 4, found in Vibrio parahaemolyticus serotype O3:K6 (strain RIMD 2210633).